The primary structure comprises 451 residues: Probable D-serine dehydratase (451 aa).

Residues 1 to 55 (MPGRTRPSCRLAITFTPRPDSATPRAGRAAPATGRRSNRSRSTLSATASPMPRRP) are disordered. Over residues 22-35 (ATPRAGRAAPATGR) the composition is skewed to low complexity. N6-(pyridoxal phosphate)lysine is present on Lys118.

It belongs to the serine/threonine dehydratase family. DsdA subfamily. Pyridoxal 5'-phosphate is required as a cofactor.

The enzyme catalyses D-serine = pyruvate + NH4(+). The protein is Probable D-serine dehydratase of Paracidovorax citrulli (strain AAC00-1) (Acidovorax citrulli).